Here is a 463-residue protein sequence, read N- to C-terminus: RuvB-like helicase 2 (463 aa).

76-83 (GPPSTGKT) contacts ATP.

The protein belongs to the RuvB family. As to quaternary structure, may form heterododecamers with RVB1. Component of the SWR1 chromatin remodeling complex, the INO80 chromatin remodeling complex, and of the R2TP complex.

The protein localises to the nucleus. It carries out the reaction ATP + H2O = ADP + phosphate + H(+). In terms of biological role, DNA helicase which participates in several chromatin remodeling complexes, including the SWR1 and the INO80 complexes. The SWR1 complex mediates the ATP-dependent exchange of histone H2A for the H2A variant HZT1 leading to transcriptional regulation of selected genes by chromatin remodeling. The INO80 complex remodels chromatin by shifting nucleosomes and is involved in DNA repair. Also involved in pre-rRNA processing. The sequence is that of RuvB-like helicase 2 (RVB2) from Cryptococcus neoformans var. neoformans serotype D (strain JEC21 / ATCC MYA-565) (Filobasidiella neoformans).